Consider the following 373-residue polypeptide: UDP-N-acetylglucosamine--N-acetylmuramyl-(pentapeptide) pyrophosphoryl-undecaprenol N-acetylglucosamine transferase (373 aa).

Residues 14–16 (TAG), N128, R165, S199, and Q295 each bind UDP-N-acetyl-alpha-D-glucosamine.

This sequence belongs to the glycosyltransferase 28 family. MurG subfamily.

The protein resides in the cell membrane. It catalyses the reaction di-trans,octa-cis-undecaprenyl diphospho-N-acetyl-alpha-D-muramoyl-L-alanyl-D-glutamyl-meso-2,6-diaminopimeloyl-D-alanyl-D-alanine + UDP-N-acetyl-alpha-D-glucosamine = di-trans,octa-cis-undecaprenyl diphospho-[N-acetyl-alpha-D-glucosaminyl-(1-&gt;4)]-N-acetyl-alpha-D-muramoyl-L-alanyl-D-glutamyl-meso-2,6-diaminopimeloyl-D-alanyl-D-alanine + UDP + H(+). It functions in the pathway cell wall biogenesis; peptidoglycan biosynthesis. In terms of biological role, cell wall formation. Catalyzes the transfer of a GlcNAc subunit on undecaprenyl-pyrophosphoryl-MurNAc-pentapeptide (lipid intermediate I) to form undecaprenyl-pyrophosphoryl-MurNAc-(pentapeptide)GlcNAc (lipid intermediate II). The polypeptide is UDP-N-acetylglucosamine--N-acetylmuramyl-(pentapeptide) pyrophosphoryl-undecaprenol N-acetylglucosamine transferase (Mycobacterium sp. (strain KMS)).